The following is a 215-amino-acid chain: Cytochrome b6 (215 aa).

Residues 1 to 31 (MANVYDWFQERLEIQALADDVTSKYVPPHVN) are Cytoplasmic-facing. Residues 32–52 (IFYCLGGITLTCFLIQFATGF) traverse the membrane as a helical segment. Cysteine 35 contributes to the heme c binding site. The Lumenal, thylakoid portion of the chain corresponds to 53–89 (AMTFYYKPTVTEAYASVQYIMNEVSFGWLIRSIHRWS). Residues arginine 83, histidine 86, histidine 100, and arginine 103 each contribute to the heme b site. Residues 90 to 110 (ASMMVLMMILHVFRVYLTGGF) form a helical membrane-spanning segment. At 111–115 (KKPRE) the chain is on the cytoplasmic side. The chain crosses the membrane as a helical span at residues 116–136 (LTWISGVILAVITVSFGVTGY). Topologically, residues 137-185 (SLPWDQVGYWAVKIVSGVPEAIPVVGVLISDLLRGGSSVGQATLTRYYS) are lumenal, thylakoid. The chain crosses the membrane as a helical span at residues 186–206 (AHTFVLPWLIAVFMLLHFLMI). Positions 187 and 202 each coordinate heme b. Residues 207–215 (RKQGISGPL) are Cytoplasmic-facing. Residue lysine 208 participates in heme c binding.

The protein belongs to the cytochrome b family. PetB subfamily. The 4 large subunits of the cytochrome b6-f complex are cytochrome b6, subunit IV (17 kDa polypeptide, PetD), cytochrome f and the Rieske protein, while the 4 small subunits are PetG, PetL, PetM and PetN. The complex functions as a dimer. Requires heme b as cofactor. Heme c serves as cofactor.

The protein resides in the cellular thylakoid membrane. Component of the cytochrome b6-f complex, which mediates electron transfer between photosystem II (PSII) and photosystem I (PSI), cyclic electron flow around PSI, and state transitions. The polypeptide is Cytochrome b6 (Mastigocladus laminosus (Fischerella sp.)).